Consider the following 429-residue polypeptide: MDTRRILEHPVLAPVLSVTFNHDNSCFAVGLDHGFRIYESGSCVLRTSRDFGAGIGMVQMLGRTNILGLVGGGRQTKLSRNKLVLWDDKSKKQVGVISASSLVRGAKMSSKRIVLVLMDRVQVYQTAKPHPLLSTYETTDNPLGLCCLSSDRIAFPGRAIGHVQLVEVETGNVSIITAHTSALRAMALSQDGELLATASEMGTIIRVYATSNCARLYELRRGIDKAIIFSIGFSPSGKYLACTSDKSTLHVFDVTRPGGTRPITSNGGTAYAAGEPSVTGNNRPSSPYSVASSSGGGGGVMVNSNNGGSDMAADDGQGRWGFLSKLPLMPRIFSDPYSFASAKFEMADEPVSNGSREPLTRDGGLAIIGGPLKGNLGWISETEMVVIGAGRDPKWEKFAIQEGGQQDGYQGGGRRLVRVGWKRYGGETP.

4 WD repeats span residues 10–48 (PVLA…LRTS), 50–96 (DFGA…QVGV), 178–218 (AHTS…RLYE), and 223–262 (IDKA…GTRP). The disordered stretch occupies residues 262–297 (PITSNGGTAYAAGEPSVTGNNRPSSPYSVASSSGGG).

The protein belongs to the WD repeat PROPPIN family.

It localises to the vacuole membrane. Its subcellular location is the cytoplasmic vesicle membrane. Functionally, involved in mitochondrial or peroxisomal functions and amino acid signaling pathways. The sequence is that of SVP1-like protein 2 (apg-14) from Neurospora crassa (strain ATCC 24698 / 74-OR23-1A / CBS 708.71 / DSM 1257 / FGSC 987).